The primary structure comprises 532 residues: Di/tripeptide-binding protein 2 (532 aa).

The first 24 residues, 1 to 24 (MRPRSALRYSLLLLAFAASAAIQA), serve as a signal peptide directing secretion.

The protein belongs to the bacterial solute-binding protein 5 family. In terms of assembly, the complex is composed of two ATP-binding proteins (DppD and DppF), two transmembrane proteins (DppB and DppC) and a solute-binding protein (DppA2). Five orthologous SBPs (DppA1-A5) are present in P.aeruginosa, which increases the substrate specificity of the DppBCDF transporter.

In terms of biological role, part of the ABC transporter DppABCDF involved in the uptake of various di/tripeptides. Shows high flexibility on substrate recognition. Efficiently uses tripeptides. This Pseudomonas aeruginosa (strain UCBPP-PA14) protein is Di/tripeptide-binding protein 2.